The chain runs to 154 residues: MIRRLHRVKVLRVERAEKAIKTQQACLQAAHRRHQEAVQTSQDYHLWRIDEEQRLFDQRKNTTLNCKDLEKWQRQIASLREKEANYELECAKLLERLANERERLTLCQKMLQQARHKENKFLELVRREDEDELNQQHYQEEQEQEEFLQHHRNA.

The segment at 132–154 (ELNQQHYQEEQEQEEFLQHHRNA) is disordered.

It belongs to the SpaM family.

Its function is as follows. Component of the yop secretion machinery. The chain is Yop proteins translocation protein O (yscO) from Yersinia pseudotuberculosis serotype I (strain IP32953).